Here is a 618-residue protein sequence, read N- to C-terminus: ELMO domain-containing protein C (618 aa).

A coiled-coil region spans residues 1 to 72 (MERYRIRRER…EELRLQGDRF (72 aa)). Disordered regions lie at residues 153-175 (NFDNNNNNNNNSNNNNNGNKPSL) and 245-276 (TTTTTTTTTTTTTTTTTTTTTTTTTPTSSTTV). Low complexity-rich tracts occupy residues 156-171 (NNNNNNNNSNNNNNGN) and 245-275 (TTTTTTTTTTTTTTTTTTTTTTTTTPTSSTT). The ELMO domain occupies 382–545 (DHEEYLKHLW…KLKSQLNEIS (164 aa)). 2 stretches are compositionally biased toward low complexity: residues 574–592 (QQQQQLQQQQQSLPLPSSP) and 602–618 (TTTSSTSISPSKNTQNN). The tract at residues 574–618 (QQQQQLQQQQQSLPLPSSPRSFLNNYQQTTTSSTSISPSKNTQNN) is disordered.

The polypeptide is ELMO domain-containing protein C (elmoC) (Dictyostelium discoideum (Social amoeba)).